The following is a 227-amino-acid chain: Ferritin light chain (227 aa).

The first 19 residues, 1 to 19 (MKFFVALALFACLGSLALA), serve as a signal peptide directing secretion. The cysteines at positions 25 and 44 are disulfide-linked. The region spanning 48 to 208 (FAGIDHIEPE…GYANDLAKLM (161 aa)) is the Ferritin-like diiron domain.

The protein belongs to the ferritin family. As to quaternary structure, oligomer of 12 light (L) chains and 12 heavy (H) chains; L and H chains are disulfide-linked. The functional molecule forms a roughly spherical shell with a diameter of 12 nm and contains a central cavity into which the insoluble ferric iron core is deposited. Expressed in hemolymph, gut, ovaries and to a lesser extent in testes (at protein level). Expressed in the head (at protein level).

The protein localises to the golgi apparatus. The protein resides in the secreted. In terms of biological role, stores iron in a soluble, non-toxic, readily available form. Important for iron homeostasis. Iron is taken up in the ferrous form and deposited as ferric hydroxides after oxidation. Ferritin is composed of a heavy (H) chain which is responsible for the oxidation and uptake of ferrous iron, and a light (L) chain which facilitates the nucleation of the ferrihydrite iron core. Required for dietary iron absorption in the midgut. Involved in tissue iron detoxification by exporting excess iron. Plays a role in the maintenance of circadian rhythms. Required for embryo and larval development. In Drosophila melanogaster (Fruit fly), this protein is Ferritin light chain.